Consider the following 80-residue polypeptide: Conotoxin SmIVA (80 aa).

A signal peptide spans 1-21; the sequence is MGMRMMFTVFLLVVLATTVVS. Positions 22–38 are excised as a propeptide; that stretch reads IPSDRASDGRNAAVNER. The residue at position 39 (Gln39) is a Pyrrolidone carboxylic acid. Ser45 carries an O-linked (HexNAc...) serine glycan. Pro55, Pro60, Pro70, and Pro72 each carry 4-hydroxyproline. A Serine amide modification is found at Ser75. A propeptide spanning residues 76-80 is cleaved from the precursor; the sequence is GRRND.

This sequence belongs to the conotoxin A superfamily. Post-translationally, contains 3 disulfide bonds. In terms of tissue distribution, expressed by the venom duct.

The protein resides in the secreted. Neurotoxin with probable activity on sodium channel. Induces intense repetitive firing of the frog neuromuscular junction, leading to a tetanic contracture in muscle fiber (spastic paralysis). In vivo, shows the same effect as the whole venom when injected on fish prey. This is Conotoxin SmIVA from Conus stercusmuscarum (Fly-specked cone).